The primary structure comprises 331 residues: Major ferric iron-binding protein (331 aa).

Positions 1–22 (MKTSIRYALLAAALTAATPALA) are cleaved as a signal peptide. Fe cation contacts are provided by His-31, Glu-79, Tyr-217, and Tyr-218.

The protein belongs to the bacterial solute-binding protein 1 family.

Its subcellular location is the periplasm. This protein may be a central component in the iron-acquisition system. The chain is Major ferric iron-binding protein (fbpA) from Neisseria meningitidis serogroup B (strain ATCC BAA-335 / MC58).